A 391-amino-acid chain; its full sequence is Steroid 3-ketoacyl-CoA thiolase (391 aa).

Cysteine 93 functions as the Acyl-thioester intermediate in the catalytic mechanism. Residues glutamine 151, arginine 221 to threonine 223, and serine 246 each bind CoA. Catalysis depends on proton acceptor residues histidine 347 and cysteine 377. A substrate-binding site is contributed by glycine 379.

It belongs to the thiolase-like superfamily. Thiolase family. In terms of assembly, dimer of dimers.

The enzyme catalyses an acyl-CoA + acetyl-CoA = a 3-oxoacyl-CoA + CoA. The catalysed reaction is 3-oxochol-4-en-22-oyl-CoA + acetyl-CoA = 3,22-dioxochol-4-en-24-oyl-CoA + CoA. It participates in steroid metabolism; cholesterol degradation. Functionally, involved in the beta-oxidation of the cholesterol side chain. It is important for utilization of cholesterol as a sole carbon source in vitro and for full virulence in the chronic stage of mouse lung infection. Catalyzes the thiolysis of 3,22-dioxochol-4-en-24-oyl-CoA to yield 3-oxo-4-pregnene-20-carboxyl-CoA (3-OPC-CoA) and acetyl-CoA. Also able to use acetoacetyl-CoA (AcAcCoA) as substrate. The polypeptide is Steroid 3-ketoacyl-CoA thiolase (fadA5) (Mycobacterium tuberculosis (strain ATCC 25618 / H37Rv)).